Here is a 207-residue protein sequence, read N- to C-terminus: 3-demethoxyubiquinol 3-hydroxylase (207 aa).

Fe cation-binding residues include glutamate 56, glutamate 86, histidine 89, glutamate 138, glutamate 170, and histidine 173.

The protein belongs to the COQ7 family. Fe cation is required as a cofactor.

It localises to the cell membrane. It carries out the reaction a 5-methoxy-2-methyl-3-(all-trans-polyprenyl)benzene-1,4-diol + AH2 + O2 = a 3-demethylubiquinol + A + H2O. It participates in cofactor biosynthesis; ubiquinone biosynthesis. Functionally, catalyzes the hydroxylation of 2-nonaprenyl-3-methyl-6-methoxy-1,4-benzoquinol during ubiquinone biosynthesis. In Cupriavidus necator (strain ATCC 17699 / DSM 428 / KCTC 22496 / NCIMB 10442 / H16 / Stanier 337) (Ralstonia eutropha), this protein is 3-demethoxyubiquinol 3-hydroxylase.